Consider the following 349-residue polypeptide: N-formyl peptide receptor 3 (349 aa).

Residues 1–27 are Extracellular-facing; sequence METNFSIPLNETEEVLPEPAGHTVLWI. Residues asparagine 4 and asparagine 10 are each glycosylated (N-linked (GlcNAc...) asparagine). Residues 28–50 traverse the membrane as a helical segment; that stretch reads FSLLVHGVTFIFGVLGNGLVIWV. Over 51-61 the chain is Cytoplasmic; sequence AGFLMTRTVNT. A helical transmembrane segment spans residues 62–83; that stretch reads ICYLNLALADFSFSAILPFHMV. The Extracellular portion of the chain corresponds to 84 to 100; that stretch reads SVAMREKWPFGSFLCKL. A disulfide bond links cysteine 98 and cysteine 176. The chain crosses the membrane as a helical span at residues 101–121; it reads VHVMIDINLFVSVYLITIIAL. The Cytoplasmic segment spans residues 122–140; it reads DRCICVLHPAWAQNHRTMS. Residues 141–162 form a helical membrane-spanning segment; it reads LAKRVMTGLWILTIVLTLPNFI. Residues 163-205 lie on the Extracellular side of the membrane; it reads FWTTISTTNGDTYCIFNFPFWGDTAVERLNVFITMAKVFLILH. The helical transmembrane segment at 206–226 threads the bilayer; that stretch reads FIIGFSMPMSIITVCYGIIAA. The Cytoplasmic segment spans residues 227 to 242; sequence KIHRNHMIKSSRPLRV. Residues 243–266 form a helical membrane-spanning segment; sequence FAAVVASFFICWFPYELIGILMAV. At 267 to 286 the chain is on the extracellular side; that stretch reads WLKEMLLNGKYKIILVLINP. A helical transmembrane segment spans residues 287–306; that stretch reads TSSLAFFNSCLNPILYVFLG. The Cytoplasmic segment spans residues 307–349; it reads SNFQERLIRSLPTSLERALTEVPDSAQTSNTHTTSASPPEETE. The tract at residues 327-349 is disordered; it reads EVPDSAQTSNTHTTSASPPEETE. Residues 331–343 are compositionally biased toward polar residues; it reads SAQTSNTHTTSAS.

Belongs to the G-protein coupled receptor 1 family.

Its subcellular location is the cell membrane. In terms of biological role, low affinity receptor for N-formyl-methionyl peptides, which are powerful neutrophils chemotactic factors. Binding of FMLP to the receptor causes activation of neutrophils. This response is mediated via a G-protein that activates a phosphatidylinositol-calcium second messenger system. In Gorilla gorilla gorilla (Western lowland gorilla), this protein is N-formyl peptide receptor 3 (FPR3).